A 259-amino-acid polypeptide reads, in one-letter code: Probable transcriptional regulatory protein Noca_2383 (259 aa).

The protein belongs to the TACO1 family.

Its subcellular location is the cytoplasm. The chain is Probable transcriptional regulatory protein Noca_2383 from Nocardioides sp. (strain ATCC BAA-499 / JS614).